The sequence spans 376 residues: Fibromodulin (376 aa).

A signal peptide spans 1 to 18; that stretch reads MQWTSLLLLAGLFSLSQA. Glutamine 19 is modified (pyrrolidone carboxylic acid). Sulfotyrosine is present on residues tyrosine 20, tyrosine 38, tyrosine 39, tyrosine 45, tyrosine 47, tyrosine 53, and tyrosine 55. An LRRNT domain is found at 67–105; the sequence is SPSPPDPRDCPQECDCPPNFPTAMYCDNRNLKYLPFVPS. 8 LRR repeats span residues 106 to 127, 130 to 151, 156 to 176, 177 to 198, 201 to 222, 224 to 245, 246 to 266, and 269 to 289; these read RMKY…VFDN, GLLW…RKVF, HLER…PLPR, SLRE…ALEG, NLTA…MRGL, SLIL…LPSA, LEQL…YFRG, and KLLY…ASNT. N-linked (GlcNAc...) (keratan sulfate) asparagine glycosylation is present at asparagine 127. The N-linked (GlcNAc...) (keratan sulfate) asparagine glycan is linked to asparagine 166. An N-linked (GlcNAc...) (keratan sulfate) asparagine glycan is attached at asparagine 201. The N-linked (GlcNAc...) (keratan sulfate) asparagine glycan is linked to asparagine 291. LRR repeat units follow at residues 294 to 315 and 316 to 335; these read SLLE…NTNL and ENLY…SFCT. An intrachain disulfide couples cysteine 334 to cysteine 367. The N-linked (GlcNAc...) asparagine glycan is linked to asparagine 341. The LRR 11 repeat unit spans residues 344 to 365; that stretch reads KLQVLRLDGNEIKRSAMPADAP.

Belongs to the small leucine-rich proteoglycan (SLRP) family. SLRP class II subfamily. As to quaternary structure, binds to type I and type II collagen. Post-translationally, binds keratan sulfate chains.

The protein resides in the secreted. Its subcellular location is the extracellular space. It localises to the extracellular matrix. In terms of biological role, affects the rate of fibrils formation. May have a primary role in collagen fibrillogenesis. The polypeptide is Fibromodulin (FMOD) (Homo sapiens (Human)).